The primary structure comprises 253 residues: Phosphoglycerate mutase 2 (253 aa).

At T3 the chain carries Phosphothreonine. Residues R10–N17, C23–G24, R62, E89–Y92, K100, and R116–R117 contribute to the substrate site. The Tele-phosphohistidine intermediate role is filled by H11. Phosphoserine is present on residues S14 and S15. E89 serves as the catalytic Proton donor/acceptor. S118 carries the phosphoserine modification. Residue T121 is modified to Phosphothreonine. Phosphotyrosine occurs at positions 132 and 133. S135 is subject to Phosphoserine. Position 152 is a phosphothreonine (T152). G187–N188 provides a ligand contact to substrate.

This sequence belongs to the phosphoglycerate mutase family. BPG-dependent PGAM subfamily. As to quaternary structure, homodimer. Interacts with ENO1.

It carries out the reaction (2R)-2-phosphoglycerate = (2R)-3-phosphoglycerate. It catalyses the reaction (2R)-3-phospho-glyceroyl phosphate = (2R)-2,3-bisphosphoglycerate + H(+). Functionally, interconversion of 3- and 2-phosphoglycerate with 2,3-bisphosphoglycerate as the primer of the reaction. Can also catalyze the reaction of EC 5.4.2.4 (synthase), but with a reduced activity. This Rattus norvegicus (Rat) protein is Phosphoglycerate mutase 2 (Pgam2).